We begin with the raw amino-acid sequence, 214 residues long: 14-3-3 protein homolog 2 (214 aa).

It belongs to the 14-3-3 family.

This chain is 14-3-3 protein homolog 2, found in Schistosoma mansoni (Blood fluke).